Consider the following 437-residue polypeptide: 3-phosphoshikimate 1-carboxyvinyltransferase (437 aa).

3-phosphoshikimate-binding residues include Lys24, Ser25, and Arg29. Lys24 is a binding site for phosphoenolpyruvate. Phosphoenolpyruvate contacts are provided by Gly95 and Arg123. 4 residues coordinate 3-phosphoshikimate: Ser168, Gln170, Asp317, and Lys344. Gln170 contributes to the phosphoenolpyruvate binding site. Asp317 (proton acceptor) is an active-site residue. The phosphoenolpyruvate site is built by Arg348 and Arg390.

It belongs to the EPSP synthase family. Monomer.

The protein resides in the cytoplasm. It carries out the reaction 3-phosphoshikimate + phosphoenolpyruvate = 5-O-(1-carboxyvinyl)-3-phosphoshikimate + phosphate. The protein operates within metabolic intermediate biosynthesis; chorismate biosynthesis; chorismate from D-erythrose 4-phosphate and phosphoenolpyruvate: step 6/7. Its function is as follows. Catalyzes the transfer of the enolpyruvyl moiety of phosphoenolpyruvate (PEP) to the 5-hydroxyl of shikimate-3-phosphate (S3P) to produce enolpyruvyl shikimate-3-phosphate and inorganic phosphate. The chain is 3-phosphoshikimate 1-carboxyvinyltransferase from Wolinella succinogenes (strain ATCC 29543 / DSM 1740 / CCUG 13145 / JCM 31913 / LMG 7466 / NCTC 11488 / FDC 602W) (Vibrio succinogenes).